Here is a 37-residue protein sequence, read N- to C-terminus: Large ribosomal subunit protein bL36 (37 aa).

The protein belongs to the bacterial ribosomal protein bL36 family.

In Sulfurihydrogenibium sp. (strain YO3AOP1), this protein is Large ribosomal subunit protein bL36.